A 492-amino-acid polypeptide reads, in one-letter code: MQLTTQALMVQGTTSDAGKSVLVTGLCRVLVRKGIKVAPFKSQNMALNSAVTKDGGEIGRAQAVQAQAACIEPTVHMNPVLLKPNTDVGAQIIVQGKAIADMDAIGYNGYKKVVMGPIMESFGILQDEYQTVIIEGAGSPAEINLRENDVANMGFAEKADVPVIIIADIDRGGVFAHLYGTLALLSESEQARVIGFVINRFRGDIKLLESGLDWLEEKTGKPVLGVLPYLHGLMLEAEDAINVQQVEAADEQLNVVVPVLTRVSNHTDFDPLRMHPQVNLQFVGKGQPIPPTDLIIIPGTKSVRSDLAFLREQGWDKQIERHLRLGGKVMGICGGYQMLGESIADPDGIEGDAGESQGLGYLQTSTILAPEKQLKQTVGTLQLPEQPAVPVRGYEIHAGITSGIQTNAPVQLQDGPDGQLGIDNQVFGTYLHGIFEQTEACNAILSWAGLEATQTPDFDLIREQGIDRVADTLEEYMKLDKLWPEWADKFAK.

The region spanning 252–440 (QLNVVVPVLT…LHGIFEQTEA (189 aa)) is the GATase cobBQ-type domain. C333 (nucleophile) is an active-site residue. H432 is an active-site residue.

Belongs to the CobB/CobQ family. CobQ subfamily.

The protein operates within cofactor biosynthesis; adenosylcobalamin biosynthesis. Catalyzes amidations at positions B, D, E, and G on adenosylcobyrinic A,C-diamide. NH(2) groups are provided by glutamine, and one molecule of ATP is hydrogenolyzed for each amidation. The polypeptide is Cobyric acid synthase (Photobacterium profundum (strain SS9)).